Consider the following 270-residue polypeptide: tRNA 2-(methylsulfanyl)-N(6)-isopentenyladenosine(37) hydroxylase (270 aa).

Fe cation is bound by residues glutamate 59, glutamate 137, histidine 140, glutamate 190, glutamate 219, and histidine 222.

It belongs to the MiaE family. Monomer. Requires Fe cation as cofactor.

It carries out the reaction 2-methylsulfanyl-N(6)-dimethylallyladenosine(37) in tRNA + AH2 + O2 = N(6)-[(2E)-4-hydroxy-3-methylbut-2-en-1-yl]-2-(methylsulfanyl)adenosine(37) in tRNA + A + H2O. It functions in the pathway tRNA modification; 2-methylthio-N-6-(cis-hydroxy)isopentenyl adenosine-tRNA biosynthesis. Functionally, involved in specific tRNA modification. Catalyzes the oxygen-dependent hydroxylation of 2-methylthio-N-6-isopentenyl adenosine (ms2i6A) to produce 2-methylthio-N-6-(cis-hydroxy)isopentenyl adenosine (ms2io6A) at position 37 in tRNAs. Can also use N6-(dimethylallyl)adenosine (i6A) as substrate, with lower efficiency. The presence of the hydroxyl group on the tRNA may regulate the ability of S.typhimurium to grow on the citric acid cycle (CAC) intermediates succinate, fumarate and malate. In Salmonella typhimurium (strain LT2 / SGSC1412 / ATCC 700720), this protein is tRNA 2-(methylsulfanyl)-N(6)-isopentenyladenosine(37) hydroxylase.